Here is a 469-residue protein sequence, read N- to C-terminus: Putative diacyglycerol O-acyltransferase MT0231 (469 aa).

Residue H139 is the Proton acceptor of the active site.

The protein belongs to the long-chain O-acyltransferase family.

It catalyses the reaction an acyl-CoA + a 1,2-diacyl-sn-glycerol = a triacyl-sn-glycerol + CoA. Its pathway is glycerolipid metabolism; triacylglycerol biosynthesis. The polypeptide is Putative diacyglycerol O-acyltransferase MT0231 (Mycobacterium tuberculosis (strain CDC 1551 / Oshkosh)).